A 304-amino-acid polypeptide reads, in one-letter code: MNNKSIRTQILIEALPYIQQFRGAIFVIKYGGAAMKDLISKERLIADIVFLSCIGLKLVCVHGGGPEINFWLNKMNVESKFHDGIRITDELTMQVVEMVLAGKINKELVSLLNNKGVKGVGLCGKDGTILTARKAQCGSIDMGLVGEIKSVDPYLILTLLKENYIPVIASVGADETGKTYNINADFVAGEIAASLGAEKLILVTNTSGILADVSQPESLIRDTNIMQLRQLLSRGIISKGMIPKVNCSIRSLAQGVRAVHIIDGTKPHSLLLEVLTNNGIGTRFLYKQSILLQLNCFSFSNVSI.

Residues 64–65 (GG), arginine 86, and asparagine 181 each bind substrate.

Belongs to the acetylglutamate kinase family. ArgB subfamily.

The protein localises to the plastid. The protein resides in the chloroplast. The catalysed reaction is N-acetyl-L-glutamate + ATP = N-acetyl-L-glutamyl 5-phosphate + ADP. It functions in the pathway amino-acid biosynthesis; L-arginine biosynthesis; N(2)-acetyl-L-ornithine from L-glutamate: step 2/4. In terms of biological role, catalyzes the ATP-dependent phosphorylation of N-acetyl-L-glutamate. This is Acetylglutamate kinase from Cyanidium caldarium (Red alga).